The sequence spans 432 residues: D-amino acid dehydrogenase 1 (432 aa).

FAD is bound at residue 3-17; it reads VLILGSGVVGTVSAY.

Belongs to the DadA oxidoreductase family. The cofactor is FAD.

The catalysed reaction is a D-alpha-amino acid + A + H2O = a 2-oxocarboxylate + AH2 + NH4(+). In terms of biological role, oxidative deamination of D-amino acids. The protein is D-amino acid dehydrogenase 1 (dadA1) of Pseudomonas putida (strain ATCC 47054 / DSM 6125 / CFBP 8728 / NCIMB 11950 / KT2440).